Consider the following 644-residue polypeptide: Pesticidal crystal protein Cry3Aa (644 aa).

The segment covering 1–13 (MNPNNRSEHDTIK) has biased composition (basic and acidic residues). The tract at residues 1 to 20 (MNPNNRSEHDTIKTTENNEV) is disordered. The propeptide at 1–57 (MNPNNRSEHDTIKTTENNEVPTNHVQYPLAETPNPTLEDLNYKEFLRMTADNNTEAL) is removed in mature form.

This sequence belongs to the delta endotoxin family.

In terms of biological role, promotes colloidosmotic lysis by binding to the midgut epithelial cells of Coleoptera. In Bacillus thuringiensis subsp. san diego, this protein is Pesticidal crystal protein Cry3Aa (cry3Aa).